The primary structure comprises 127 residues: Small ribosomal subunit protein eS8 (127 aa).

The segment at 1–33 (MAIWQGKSMKKPSGGRAKMNRGKRKYELGREPA) is disordered.

This sequence belongs to the eukaryotic ribosomal protein eS8 family. Part of the 30S ribosomal subunit.

This is Small ribosomal subunit protein eS8 (rps8e) from Methanothermobacter thermautotrophicus (strain ATCC 29096 / DSM 1053 / JCM 10044 / NBRC 100330 / Delta H) (Methanobacterium thermoautotrophicum).